The sequence spans 167 residues: Cyclic pyranopterin monophosphate synthase 2 (167 aa).

Residues 1-23 (MARASGASDYRSGELSHQDERGA) are disordered. Over residues 11 to 23 (RSGELSHQDERGA) the composition is skewed to basic and acidic residues. Residues 86–88 (LCH) and 122–123 (ME) each bind substrate. The active site involves aspartate 137.

This sequence belongs to the MoaC family. In terms of assembly, homohexamer; trimer of dimers.

The catalysed reaction is (8S)-3',8-cyclo-7,8-dihydroguanosine 5'-triphosphate = cyclic pyranopterin phosphate + diphosphate. It participates in cofactor biosynthesis; molybdopterin biosynthesis. Catalyzes the conversion of (8S)-3',8-cyclo-7,8-dihydroguanosine 5'-triphosphate to cyclic pyranopterin monophosphate (cPMP). This is Cyclic pyranopterin monophosphate synthase 2 (moaC2) from Mycobacterium bovis (strain ATCC BAA-935 / AF2122/97).